A 27-amino-acid polypeptide reads, in one-letter code: Antimicrobial peptide 1 (27 aa).

In terms of tissue distribution, expressed by the skin glands.

The protein localises to the secreted. Functionally, has very weak antimicrobial activity against Gram-positive bacterium S.aureus and Gram-negative bacterium E.coli and stronger activity against yeast C.albicans. Enhances the antibacterial activity of XT3. Has hemolytic activity against human red blood cells. The protein is Antimicrobial peptide 1 of Xenopus tropicalis (Western clawed frog).